A 287-amino-acid chain; its full sequence is Bifunctional protein FolD (287 aa).

NADP(+) is bound by residues 164–166 (GSS), Ser189, and Ile230.

Belongs to the tetrahydrofolate dehydrogenase/cyclohydrolase family. Homodimer.

The catalysed reaction is (6R)-5,10-methylene-5,6,7,8-tetrahydrofolate + NADP(+) = (6R)-5,10-methenyltetrahydrofolate + NADPH. It carries out the reaction (6R)-5,10-methenyltetrahydrofolate + H2O = (6R)-10-formyltetrahydrofolate + H(+). The protein operates within one-carbon metabolism; tetrahydrofolate interconversion. Catalyzes the oxidation of 5,10-methylenetetrahydrofolate to 5,10-methenyltetrahydrofolate and then the hydrolysis of 5,10-methenyltetrahydrofolate to 10-formyltetrahydrofolate. The sequence is that of Bifunctional protein FolD from Aliarcobacter butzleri (strain RM4018) (Arcobacter butzleri).